A 532-amino-acid polypeptide reads, in one-letter code: Pentatricopeptide repeat-containing protein At5g66500, mitochondrial (532 aa).

A mitochondrion-targeting transit peptide spans Met1–Phe33. PPR repeat units lie at residues Asp48 to Leu82, Ser83 to Thr117, Gly118 to Lys148, Asp149 to Ile183, Ser184 to Leu218, Thr223 to His248, Asp250 to Asn280, Val281 to Ser314, Asp315 to Lys345, Ser346 to Val380, Asn383 to Lys413, and Gly419 to Ser453. A type E motif; degenerate region spans residues Ile458 to Ile532.

It belongs to the PPR family. PCMP-E subfamily.

It localises to the mitochondrion. The sequence is that of Pentatricopeptide repeat-containing protein At5g66500, mitochondrial (PCMP-E38) from Arabidopsis thaliana (Mouse-ear cress).